The chain runs to 226 residues: Sugar fermentation stimulation protein homolog (226 aa).

The protein belongs to the SfsA family.

This Ruminiclostridium cellulolyticum (strain ATCC 35319 / DSM 5812 / JCM 6584 / H10) (Clostridium cellulolyticum) protein is Sugar fermentation stimulation protein homolog.